A 375-amino-acid chain; its full sequence is Alcohol dehydrogenase 6 (375 aa).

The Zn(2+) site is built by C47, H69, C99, C102, C105, C113, and C175. Residues 200–205 (GLGGVG), D224, K229, 293–295 (VGS), and R370 contribute to the NAD(+) site.

The protein belongs to the zinc-containing alcohol dehydrogenase family. Class-V subfamily. As to quaternary structure, dimer. Zn(2+) is required as a cofactor. As to expression, liver.

Its subcellular location is the cytoplasm. The catalysed reaction is a primary alcohol + NAD(+) = an aldehyde + NADH + H(+). It carries out the reaction a secondary alcohol + NAD(+) = a ketone + NADH + H(+). Its function is as follows. Alcohol dehydrogenase. Catalyzes the NAD-dependent oxidation of primary alcohols to the corresponding aldehydes. Oxidizes secondary alcohols to the corresponding ketones. The polypeptide is Alcohol dehydrogenase 6 (ADH6) (Peromyscus maniculatus (North American deer mouse)).